Here is a 101-residue protein sequence, read N- to C-terminus: Putative regulatory protein PrgT (101 aa).

Might be involved in the expression of prgA, but is not required for activation of the expression of prgB. The sequence is that of Putative regulatory protein PrgT (prgT) from Enterococcus faecalis (strain ATCC 47077 / OG1RF).